Here is a 483-residue protein sequence, read N- to C-terminus: SWI/SNF-related matrix-associated actin-dependent regulator of chromatin subfamily D member 3 (483 aa).

An N-acetylalanine modification is found at Ala-2. Positions 26 to 102 (VRPGMPSGAR…ARSRSAKRRK (77 aa)) are disordered. Residues 78–87 (QSQAQSQGQP) are compositionally biased toward low complexity. Ser-178 is modified (phosphoserine). One can recognise an SWIB/MDM2 domain in the interval 258-335 (YQPPQFKLDP…PQRLTALLLP (78 aa)).

The protein belongs to the SMARCD family. Component of the multiprotein chromatin-remodeling complexes SWI/SNF: SWI/SNF-A (BAF), SWI/SNF-B (PBAF) and related complexes. The canonical complex contains a catalytic subunit (either SMARCA4/BRG1/BAF190A or SMARCA2/BRM/BAF190B) and at least SMARCE1, ACTL6A/BAF53, SMARCC1/BAF155, SMARCC2/BAF170, and SMARCB1/SNF5/BAF47. Other subunits specific to each of the complexes may also be present permitting several possible combinations developmentally and tissue specific. Component of the BAF complex, which includes at least actin (ACTB), ARID1A/BAF250A, ARID1B/BAF250B, SMARCA2/BRM, SMARCA4/BRG1/BAF190A, ACTL6A/BAF53, ACTL6B/BAF53B, SMARCE1/BAF57, SMARCC1/BAF155, SMARCC2/BAF170, SMARCB1/SNF5/INI1, and one or more SMARCD1/BAF60A, SMARCD2/BAF60B, or SMARCD3/BAF60C. In muscle cells, the BAF complex also contains DPF3. Component of neural progenitors-specific chromatin remodeling complex (npBAF complex) composed of at least, ARID1A/BAF250A or ARID1B/BAF250B, SMARCD1/BAF60A, SMARCD3/BAF60C, SMARCA2/BRM/BAF190B, SMARCA4/BRG1/BAF190A, SMARCB1/BAF47, SMARCC1/BAF155, SMARCE1/BAF57, SMARCC2/BAF170, PHF10/BAF45A, ACTL6A/BAF53A and actin. Component of neuron-specific chromatin remodeling complex (nBAF complex) composed of at least, ARID1A/BAF250A or ARID1B/BAF250B, SMARCD1/BAF60A, SMARCD3/BAF60C, SMARCA2/BRM/BAF190B, SMARCA4/BRG1/BAF190A, SMARCB1/BAF47, SMARCC1/BAF155, SMARCE1/BAF57, SMARCC2/BAF170, DPF1/BAF45B, DPF3/BAF45C, ACTL6B/BAF53B and actin. May be a component of the SWI/SNF-B (PBAF) chromatin remodeling complex, at least composed of SMARCA4/BRG1, SMARCB1/BAF47/SNF5, ACTL6A/BAF53A or ACTL6B/BAF53B, SMARCE1/BAF57, SMARCD1/BAF60A, SMARCD2/BAF60B, perhaps SMARCD3/BAF60C, SMARCC1/BAF155, SMARCC2/BAF170, PBRM1/BAF180, ARID2/BAF200 and actin. Interacts with SMARCA4/BRG1/BAF190A. Component of SWI/SNF (GBAF) subcomplex, which includes at least BICRA or BICRAL (mutually exclusive), BRD9, SS18, SMARCA2/BRM, SMARCA4/BRG1/BAF190A, ACTL6A/BAF53, SMARCC1/BAF155, and SMARCD1/BAF60A. The precise distribution of the related SMARCD1, SMARCD2 and SMARCD3 proteins among these and other SWI/SNF nucleosome-remodeling complexes is not fully known. May allow recruitment of SWI/SNF containing complexes specifically to promoters where these factors are located. Also interacts with several nuclear receptors including PPARG/NR1C3, RXRA/NR1F1, ESR1, NR5A1, NR5A2/LRH1 and other transcriptional activators including the HLH protein SREBF1/SREBP1 and the homeobox protein PBX1. Interacts with PRDM1/BLIMP1. As to expression, isoform 2 and isoform 1 are expressed in brain, heart, kidney, placenta, prostate, salivary gland, spleen, testis, thyroid, trachea and uterus. Isoform 1 is also expressed in skeletal muscle and adipose tissue.

The protein localises to the nucleus. Its function is as follows. Involved in transcriptional activation and repression of select genes by chromatin remodeling (alteration of DNA-nucleosome topology). Component of SWI/SNF chromatin remodeling complexes that carry out key enzymatic activities, changing chromatin structure by altering DNA-histone contacts within a nucleosome in an ATP-dependent manner. Stimulates nuclear receptor mediated transcription. Belongs to the neural progenitors-specific chromatin remodeling complex (npBAF complex) and the neuron-specific chromatin remodeling complex (nBAF complex). During neural development a switch from a stem/progenitor to a postmitotic chromatin remodeling mechanism occurs as neurons exit the cell cycle and become committed to their adult state. The transition from proliferating neural stem/progenitor cells to postmitotic neurons requires a switch in subunit composition of the npBAF and nBAF complexes. As neural progenitors exit mitosis and differentiate into neurons, npBAF complexes which contain ACTL6A/BAF53A and PHF10/BAF45A, are exchanged for homologous alternative ACTL6B/BAF53B and DPF1/BAF45B or DPF3/BAF45C subunits in neuron-specific complexes (nBAF). The npBAF complex is essential for the self-renewal/proliferative capacity of the multipotent neural stem cells. The nBAF complex along with CREST plays a role regulating the activity of genes essential for dendrite growth. The chain is SWI/SNF-related matrix-associated actin-dependent regulator of chromatin subfamily D member 3 (SMARCD3) from Homo sapiens (Human).